The sequence spans 157 residues: UPF0225 protein PA14_50900 (157 aa).

The protein belongs to the UPF0225 family.

The polypeptide is UPF0225 protein PA14_50900 (Pseudomonas aeruginosa (strain UCBPP-PA14)).